We begin with the raw amino-acid sequence, 223 residues long: Deoxyribose-phosphate aldolase (223 aa).

Residue Asp-91 is the Proton donor/acceptor of the active site. Lys-154 acts as the Schiff-base intermediate with acetaldehyde in catalysis. The active-site Proton donor/acceptor is the Lys-183.

Belongs to the DeoC/FbaB aldolase family. DeoC type 1 subfamily.

Its subcellular location is the cytoplasm. It catalyses the reaction 2-deoxy-D-ribose 5-phosphate = D-glyceraldehyde 3-phosphate + acetaldehyde. It functions in the pathway carbohydrate degradation; 2-deoxy-D-ribose 1-phosphate degradation; D-glyceraldehyde 3-phosphate and acetaldehyde from 2-deoxy-alpha-D-ribose 1-phosphate: step 2/2. Catalyzes a reversible aldol reaction between acetaldehyde and D-glyceraldehyde 3-phosphate to generate 2-deoxy-D-ribose 5-phosphate. This chain is Deoxyribose-phosphate aldolase, found in Geobacillus thermodenitrificans (strain NG80-2).